A 65-amino-acid polypeptide reads, in one-letter code: Large ribosomal subunit protein uL29 (65 aa).

This sequence belongs to the universal ribosomal protein uL29 family.

In Lactobacillus acidophilus (strain ATCC 700396 / NCK56 / N2 / NCFM), this protein is Large ribosomal subunit protein uL29.